The chain runs to 1549 residues: FERM and PDZ domain-containing protein 1 (1549 aa).

The PDZ domain maps to Thr-57–Thr-135. The FERM domain occupies Asn-181 to Ala-496. Disordered stretches follow at residues Ala-554 to Asp-618, Ser-717 to Trp-738, Tyr-775 to Ser-834, Ser-913 to Ile-1046, Ser-1097 to Glu-1174, Leu-1231 to Pro-1257, and Pro-1321 to Gln-1347. The span at Ser-717 to Arg-730 shows a compositional bias: polar residues. The important for interaction with GPSM2 stretch occupies residues Glu-924–Lys-931. Over residues Pro-950–Gly-961 the composition is skewed to polar residues. Low complexity predominate over residues Ser-962–Pro-980. Basic and acidic residues predominate over residues Ser-1117–Asp-1130.

In terms of assembly, interacts with GPSM1. Interacts with GPSM2.

It localises to the cytoplasm. It is found in the cytosol. The protein localises to the cell membrane. Stabilizes membrane-bound GPSM1, and thereby promotes its interaction with GNAI1. This chain is FERM and PDZ domain-containing protein 1 (Frmpd1), found in Mus musculus (Mouse).